The sequence spans 474 residues: Glycogen synthase (474 aa).

An ADP-alpha-D-glucose-binding site is contributed by Lys15.

The protein belongs to the glycosyltransferase 1 family. Bacterial/plant glycogen synthase subfamily.

The enzyme catalyses [(1-&gt;4)-alpha-D-glucosyl](n) + ADP-alpha-D-glucose = [(1-&gt;4)-alpha-D-glucosyl](n+1) + ADP + H(+). It functions in the pathway glycan biosynthesis; glycogen biosynthesis. In terms of biological role, synthesizes alpha-1,4-glucan chains using ADP-glucose. This Chlamydia muridarum (strain MoPn / Nigg) protein is Glycogen synthase.